Reading from the N-terminus, the 734-residue chain is Photosystem I P700 chlorophyll a apoprotein A2 (734 aa).

8 helical membrane passes run 46 to 69, 135 to 158, 175 to 199, 273 to 291, 330 to 353, 369 to 395, 417 to 439, and 517 to 535; these read IFAS…FHVA, LYTG…LHLQ, LNHH…HVAI, IAHH…GHMY, IHFQ…QHMY, AALY…IFFI, AIIS…LYVH, and FLVH…LILV. [4Fe-4S] cluster-binding residues include Cys559 and Cys568. 2 helical membrane-spanning segments follow: residues 575 to 596 and 643 to 665; these read AFYL…YWHW and LSVW…MFLI. His654, Met662, and Tyr670 together coordinate chlorophyll a. Phylloquinone is bound at residue Trp671. Residues 707–727 traverse the membrane as a helical segment; it reads LVGLAHFSVGYIFTYAAFLIA.

The protein belongs to the PsaA/PsaB family. As to quaternary structure, the PsaA/B heterodimer binds the P700 chlorophyll special pair and subsequent electron acceptors. PSI consists of a core antenna complex that captures photons, and an electron transfer chain that converts photonic excitation into a charge separation. The eukaryotic PSI reaction center is composed of at least 11 subunits. Requires P700 is a chlorophyll a/chlorophyll a' dimer, A0 is one or more chlorophyll a, A1 is one or both phylloquinones and FX is a shared 4Fe-4S iron-sulfur center. as cofactor.

The protein localises to the plastid. Its subcellular location is the chloroplast thylakoid membrane. It catalyses the reaction reduced [plastocyanin] + hnu + oxidized [2Fe-2S]-[ferredoxin] = oxidized [plastocyanin] + reduced [2Fe-2S]-[ferredoxin]. In terms of biological role, psaA and PsaB bind P700, the primary electron donor of photosystem I (PSI), as well as the electron acceptors A0, A1 and FX. PSI is a plastocyanin-ferredoxin oxidoreductase, converting photonic excitation into a charge separation, which transfers an electron from the donor P700 chlorophyll pair to the spectroscopically characterized acceptors A0, A1, FX, FA and FB in turn. Oxidized P700 is reduced on the lumenal side of the thylakoid membrane by plastocyanin. The polypeptide is Photosystem I P700 chlorophyll a apoprotein A2 (Vitis vinifera (Grape)).